The following is a 252-amino-acid chain: MLAKRIIPCLDVDKGRVVKGVNFVNLIDAGDPVEIASVYDKEGADELVFLDITASSEDRNIILDVVKKTAETVFMPLTVGGGVRSLEDIRKLLENGADKVSINTAAVKNPSLVENAAIRFGSSTIVVAIDAKKVGENKWEVYIHGGRTPTGIDAIEWAKAVESLGAGEILLTSMDKDGTKSGYDIELTKAVSEAVKIPVIASGGAGNVQHFYEAFEYGKADACLAASLFHFKEIEISELKNYLKNKGINVRL.

Residues Asp-11 and Asp-130 contribute to the active site.

Belongs to the HisA/HisF family. As to quaternary structure, heterodimer of HisH and HisF.

The protein localises to the cytoplasm. The catalysed reaction is 5-[(5-phospho-1-deoxy-D-ribulos-1-ylimino)methylamino]-1-(5-phospho-beta-D-ribosyl)imidazole-4-carboxamide + L-glutamine = D-erythro-1-(imidazol-4-yl)glycerol 3-phosphate + 5-amino-1-(5-phospho-beta-D-ribosyl)imidazole-4-carboxamide + L-glutamate + H(+). Its pathway is amino-acid biosynthesis; L-histidine biosynthesis; L-histidine from 5-phospho-alpha-D-ribose 1-diphosphate: step 5/9. Functionally, IGPS catalyzes the conversion of PRFAR and glutamine to IGP, AICAR and glutamate. The HisF subunit catalyzes the cyclization activity that produces IGP and AICAR from PRFAR using the ammonia provided by the HisH subunit. The protein is Imidazole glycerol phosphate synthase subunit HisF of Sulfurihydrogenibium sp. (strain YO3AOP1).